The primary structure comprises 320 residues: L-lactate dehydrogenase (320 aa).

NAD(+) contacts are provided by residues Val-18, Asp-39, Arg-44, Tyr-69, and 83-84 (GA). Residues Gln-86 and Arg-92 each coordinate substrate. NAD(+) is bound by residues Ser-105, 122-124 (AAN), and Ser-147. Residue 124–127 (NPVD) participates in substrate binding. 152–155 (DSSR) serves as a coordination point for substrate. His-179 serves as the catalytic Proton acceptor. A Phosphotyrosine modification is found at Tyr-223. Substrate is bound at residue Thr-232.

This sequence belongs to the LDH/MDH superfamily. LDH family. Homotetramer.

The protein localises to the cytoplasm. The enzyme catalyses (S)-lactate + NAD(+) = pyruvate + NADH + H(+). It participates in fermentation; pyruvate fermentation to lactate; (S)-lactate from pyruvate: step 1/1. With respect to regulation, the quaternary structure is constitutionally similar to the active conformation of allosteric LDHs, and the regulation is independent of the fructose 1,6-bisphosphate-binding site. Functionally, catalyzes the conversion of lactate to pyruvate. The polypeptide is L-lactate dehydrogenase (Lactiplantibacillus pentosus (Lactobacillus pentosus)).